The following is a 409-amino-acid chain: MAVNLVAPAADSLLPIDGVDLGWAEAGIRKANRKDVLLVRIAEGASVAGVFTQNRFCAAPVQVCREHLASGQGARAIVVNTGNANAGTGAPGLALARQTCEAVAGLLGIAPQQVLPFSTGVILEPLPVDRLIAGLPAAQANAKPDNWLAAAESIMTTDTVPKAASGTCTLSGKPVRLSGISKGAGMIRPNMATMLGFIATDANVDEAVLQGLVRHAADHSFNSVTVDGDTSTNDSFVVIATGRAGTPRIDSESHPDYAALRDALTGLAQALAQKIVRDGEGATKFMTIRVEGGRSVDECRQVAYAVAHSPLVKTAFYASDPNLGRILAAVGYAGVNDLDVDGVNLWLDDVWVARDGGRNPDYREEDGQRVMKQAEITVRIALGRGDATATVWTCDFSHDYVSINADYRS.

The substrate site is built by Thr156, Lys182, Thr193, Glu280, Asn404, and Ser409. Thr193 (nucleophile) is an active-site residue.

This sequence belongs to the ArgJ family. Heterotetramer of two alpha and two beta chains.

The protein localises to the cytoplasm. It catalyses the reaction N(2)-acetyl-L-ornithine + L-glutamate = N-acetyl-L-glutamate + L-ornithine. The catalysed reaction is L-glutamate + acetyl-CoA = N-acetyl-L-glutamate + CoA + H(+). The protein operates within amino-acid biosynthesis; L-arginine biosynthesis; L-ornithine and N-acetyl-L-glutamate from L-glutamate and N(2)-acetyl-L-ornithine (cyclic): step 1/1. It participates in amino-acid biosynthesis; L-arginine biosynthesis; N(2)-acetyl-L-ornithine from L-glutamate: step 1/4. Its function is as follows. Catalyzes two activities which are involved in the cyclic version of arginine biosynthesis: the synthesis of N-acetylglutamate from glutamate and acetyl-CoA as the acetyl donor, and of ornithine by transacetylation between N(2)-acetylornithine and glutamate. The sequence is that of Arginine biosynthesis bifunctional protein ArgJ from Ralstonia nicotianae (strain ATCC BAA-1114 / GMI1000) (Ralstonia solanacearum).